We begin with the raw amino-acid sequence, 204 residues long: Somatotropin (204 aa).

Positions 1–17 (MERAVLLLSLLSLGVSS) are cleaved as a signal peptide. A Pyrrolidone carboxylic acid modification is found at Gln18. Residue His36 participates in Zn(2+) binding. A disulfide bond links Cys69 and Cys177. Zn(2+) is bound at residue Glu186. A disulfide bridge connects residues Cys194 and Cys202.

This sequence belongs to the somatotropin/prolactin family.

It is found in the secreted. Functionally, growth hormone plays an important role in growth control and involved in the regulation of several anabolic processes. The polypeptide is Somatotropin (gh) (Perca flavescens (American yellow perch)).